A 254-amino-acid polypeptide reads, in one-letter code: MGRDLRPGSRVLLLLLLLLLVYLTQPGNGNEGSVTGSCYCGKRISSDSPPSVQFMNRLRKHLRAYHRCLYYTRFQLLSWSVCGGNKDPWVQELMSCLDLKECGHAYSGIVAHQKHLLPTSPPISQASEGASSDIHTPAQMLLSTLQSTQRPTLPVGSLSSDKELTRPNETTIHTAGHSLAAGPEAGENQKQPEKNAGPTARTSATVPVLCLLAIIFILTAALSYVLCKRRRGQSPQSSPDLPVHYIPVAPDSNT.

A signal peptide spans 1 to 29; that stretch reads MGRDLRPGSRVLLLLLLLLLVYLTQPGNG. At 30-205 the chain is on the extracellular side; the sequence is NEGSVTGSCY…AGPTARTSAT (176 aa). Residues 32 to 107 form a chemokine region; it reads GSVTGSCYCG…DLKECGHAYS (76 aa). 2 disulfide bridges follow: Cys38–Cys68 and Cys40–Cys82. The disordered stretch occupies residues 146–165; the sequence is QSTQRPTLPVGSLSSDKELT. Residue Asn168 is glycosylated (N-linked (GlcNAc...) asparagine). Positions 178 to 200 are disordered; the sequence is SLAAGPEAGENQKQPEKNAGPTA. The chain crosses the membrane as a helical span at residues 206–226; it reads VPVLCLLAIIFILTAALSYVL. Residues 227–254 are Cytoplasmic-facing; sequence CKRRRGQSPQSSPDLPVHYIPVAPDSNT. Positions 231 to 254 are disordered; sequence RGQSPQSSPDLPVHYIPVAPDSNT.

Belongs to the intercrine alpha (chemokine CxC) family. In terms of processing, glycosylated. Expressed in T-cell areas. Expressed in spleen, lymph nodes, lung, kidney, small intestine and thymus. Weak expression in heart and liver and no expression in brain and bone marrow.

Its subcellular location is the cell membrane. The protein localises to the secreted. Functionally, acts as a scavenger receptor on macrophages, which specifically binds to OxLDL (oxidized low density lipoprotein), suggesting that it may be involved in pathophysiology such as atherogenesis. Induces a strong chemotactic response. Induces calcium mobilization. Binds to CXCR6/Bonzo. This is C-X-C motif chemokine 16 (CXCL16) from Homo sapiens (Human).